Reading from the N-terminus, the 117-residue chain is DNA-binding protein VNG_2008H (117 aa).

The tract at residues 1-59 is disordered; it reads MSGNPDDDRLEELRQRKKEQLKQQQQGGDAEREAQQQQAQQAEQQKQAMLKQNLTDGAR. The span at 11–21 shows a compositional bias: basic and acidic residues; that stretch reads EELRQRKKEQL. Over residues 35–48 the composition is skewed to low complexity; that stretch reads QQQQAQQAEQQKQA.

This sequence belongs to the PDCD5 family.

This chain is DNA-binding protein VNG_2008H, found in Halobacterium salinarum (strain ATCC 700922 / JCM 11081 / NRC-1) (Halobacterium halobium).